Here is a 20-residue protein sequence, read N- to C-terminus: Thylakoid lumenal 20 kDa protein (20 aa).

Residues 1-20 (RDVDVGSFLPKSPSDPSMVL) are disordered.

It localises to the plastid. The protein localises to the chloroplast thylakoid lumen. This chain is Thylakoid lumenal 20 kDa protein, found in Spinacia oleracea (Spinach).